The following is a 72-amino-acid chain: SRY-related protein AES6 (72 aa).

The HMG box DNA-binding region spans 1–69; the sequence is VKRPMNAFMV…KHMADYPDYK (69 aa).

The protein localises to the nucleus. This chain is SRY-related protein AES6, found in Alligator mississippiensis (American alligator).